The following is a 320-amino-acid chain: Ferrochelatase (320 aa).

Positions 194 and 275 each coordinate Fe cation.

The protein belongs to the ferrochelatase family. As to quaternary structure, monomer.

Its subcellular location is the cytoplasm. The catalysed reaction is heme b + 2 H(+) = protoporphyrin IX + Fe(2+). The protein operates within porphyrin-containing compound metabolism; protoheme biosynthesis; protoheme from protoporphyrin-IX: step 1/1. Catalyzes the ferrous insertion into protoporphyrin IX. This Escherichia coli (strain K12 / MC4100 / BW2952) protein is Ferrochelatase.